Consider the following 311-residue polypeptide: Malate dehydrogenase (311 aa).

NAD(+)-binding positions include 7-13 (GAAGGIG) and aspartate 34. Substrate is bound by residues arginine 81 and arginine 87. Residues asparagine 94 and 117 to 119 (ITN) contribute to the NAD(+) site. Residues asparagine 119 and arginine 153 each contribute to the substrate site. The active-site Proton acceptor is histidine 177. Methionine 227 is an NAD(+) binding site.

The protein belongs to the LDH/MDH superfamily. MDH type 1 family. In terms of assembly, homodimer.

The enzyme catalyses (S)-malate + NAD(+) = oxaloacetate + NADH + H(+). Functionally, catalyzes the reversible oxidation of malate to oxaloacetate. The chain is Malate dehydrogenase from Shewanella loihica (strain ATCC BAA-1088 / PV-4).